Here is a 30-residue protein sequence, read N- to C-terminus: Brevinin-2Rg (30 aa).

A disulfide bond links Cys-24 and Cys-30.

Expressed by the skin glands.

It is found in the secreted. In terms of biological role, antimicrobial peptide. The polypeptide is Brevinin-2Rg (Pelophylax ridibundus (Marsh frog)).